The sequence spans 476 residues: DnaJ homolog subfamily C member 7 homolog (476 aa).

The interval 1–22 (MTEVETTHMNAGTESQQEPAEL) is disordered. Over residues 7–18 (THMNAGTESQQE) the composition is skewed to polar residues. TPR repeat units follow at residues 23–56 (AEKQ…GSDS), 59–92 (AIYY…KPDV), 143–176 (MSWM…NPKN), 177–210 (VEAL…DPDC), 223–256 (LENT…DPDN), 261–294 (AKLY…DSSY), and 295–328 (LKGL…DASD). The J domain maps to 349-414 (DHYKILGVSK…ESRRRFDSGV (66 aa)).

The protein localises to the cytoplasm. The polypeptide is DnaJ homolog subfamily C member 7 homolog (Schizosaccharomyces pombe (strain 972 / ATCC 24843) (Fission yeast)).